The chain runs to 408 residues: Serine/threonine transporter SstT (408 aa).

Transmembrane regions (helical) follow at residues 19-39 (SLVS…VISP), 48-68 (LGSL…LVLV), 86-106 (IVGL…LLSF), 143-163 (VTAV…GLGF), 193-213 (FAPL…GFSA), 223-243 (VLLS…VFII), 294-314 (IPLG…VLTL), 322-342 (IEVS…SACG), and 367-387 (VAMQ…SAET).

Belongs to the dicarboxylate/amino acid:cation symporter (DAACS) (TC 2.A.23) family.

It localises to the cell inner membrane. The enzyme catalyses L-serine(in) + Na(+)(in) = L-serine(out) + Na(+)(out). It catalyses the reaction L-threonine(in) + Na(+)(in) = L-threonine(out) + Na(+)(out). Involved in the import of serine and threonine into the cell, with the concomitant import of sodium (symport system). This is Serine/threonine transporter SstT from Colwellia psychrerythraea (strain 34H / ATCC BAA-681) (Vibrio psychroerythus).